The following is a 367-amino-acid chain: Endophilin-A2 (367 aa).

The membrane-binding amphipathic helix stretch occupies residues 1-21; the sequence is MSVAGLKKQFYKASQLVSEKV. In terms of domain architecture, BAR spans 18-249; sequence SEKVGGAEGT…LKRRMREASS (232 aa). Residues 60–87 form a required for dimerization upon membrane association region; it reads PNPASRAKLTMLNTMSKIRGQVKNPGYP. Residues 181-250 adopt a coiled-coil conformation; it reads EELRQAMEKF…KRRMREASSR (70 aa). Residues 218–254 are interaction with ARC; it reads LVDAQLDYHRQAVQILDELAEKLKRRMREASSRPRRE. Positions 243–293 are disordered; that stretch reads RMREASSRPRREYKPKPRETYDFGESDQSNGGFSCTPTPKVSASSSFRSDK. A compositionally biased stretch (basic and acidic residues) spans 245–263; that stretch reads REASSRPRREYKPKPRETY. Residues 268–289 are compositionally biased toward polar residues; the sequence is SDQSNGGFSCTPTPKVSASSSF. Residues 305-364 form the SH3 domain; it reads LDQPCCKALYDFEPENDGELGFKEGDIITLTNQIDENWYEGMINGQSGFFPLNYVEVLVP.

Belongs to the endophilin family. As to quaternary structure, interacts with ARC. Interacts with SYNJ1 and DNM1. Highest level in central region of the theca of developing follicles (at protein level). Expressed at highest level in brain and testis, at high level in kidney, lung and stroma, low level in spleen and adrenal gland (at protein level). Expressed in most tissue with highest levels in small ovarian follicles, brain and testis.

It is found in the cytoplasm. The protein resides in the early endosome membrane. It localises to the cell projection. The protein localises to the podosome. Implicated in endocytosis. May recruit other proteins to membranes with high curvature. The sequence is that of Endophilin-A2 from Gallus gallus (Chicken).